A 236-amino-acid chain; its full sequence is ATP synthase subunit a, chloroplastic (236 aa).

5 helical membrane passes run 25-45, 87-107, 123-143, 180-202, and 210-230; these read MHGQ…AFAV, FIGT…LIPW, DINT…YAGL, LFGN…PLVI, and GLFT…AYIG.

Belongs to the ATPase A chain family. In terms of assembly, F-type ATPases have 2 components, CF(1) - the catalytic core - and CF(0) - the membrane proton channel. CF(1) has five subunits: alpha(3), beta(3), gamma(1), delta(1), epsilon(1). CF(0) has four main subunits: a, b, b' and c.

It is found in the plastid. Its subcellular location is the chloroplast thylakoid membrane. In terms of biological role, key component of the proton channel; it plays a direct role in the translocation of protons across the membrane. This Ostreococcus tauri protein is ATP synthase subunit a, chloroplastic.